A 367-amino-acid polypeptide reads, in one-letter code: DNA replication and repair protein RecF (367 aa).

Position 30–37 (30–37 (GANGSGKT)) interacts with ATP.

Belongs to the RecF family.

It localises to the cytoplasm. Its function is as follows. The RecF protein is involved in DNA metabolism; it is required for DNA replication and normal SOS inducibility. RecF binds preferentially to single-stranded, linear DNA. It also seems to bind ATP. This chain is DNA replication and repair protein RecF, found in Pseudomonas entomophila (strain L48).